A 652-amino-acid chain; its full sequence is MSELPFLSPEGARGPHNNRGSQSSLEEGSVTGSEARHSLGVLNVSFSVSNRVGPWWNIKSCQQKWDRKILKDVSLYIESGQTMCILGSSGSGKTTLLDAISGRLRRTGTLEGEVFVNGCELRRDQFQDCVSYLLQSDVFLSSLTVRETLRYTAMLALRSSSADFYDKKVEAVLTELSLSHVADQMIGNYNFGGISSGERRRVSIAAQLLQDPKVMMLDEPTTGLDCMTANHIVLLLVELARRNRIVIVTIHQPRSELFHHFDKIAILTYGELVFCGTPEEMLGFFNNCGYPCPEHSNPFDFYMDLTSVDTQSREREIETYKRVQMLESAFRQSDICHKILENIERTRHLKTLPMVPFKTKNPPGMFCKLGVLLRRVTRNLMRNKQVVIMRLVQNLIMGLFLIFYLLRVQNNMLKGAVQDRVGLLYQLVGATPYTGMLNAVNLFPMLRAVSDQESQDGLYQKWQMLLAYVLHALPFSIVATVIFSSVCYWTLGLYPEVARFGYFSAALLAPHLIGEFLTLVLLGMVQNPNIVNSIVALLSISGLLIGSGFIRNIEEMPIPLKILGYFTFQKYCCEILVVNEFYGLNFTCGGSNTSVPNNPMCSMTQGIQFIEKTCPGATSRFTTNFLILYSFIPTLVILGMVVFKVRDYLISR.

Residues 1 to 30 (MSELPFLSPEGARGPHNNRGSQSSLEEGSV) are disordered. At 1–384 (MSELPFLSPE…RVTRNLMRNK (384 aa)) the chain is on the cytoplasmic side. Residues 18 to 30 (NRGSQSSLEEGSV) show a composition bias toward polar residues. One can recognise an ABC transporter domain in the interval 39–294 (LGVLNVSFSV…FNNCGYPCPE (256 aa)). An ATP-binding site is contributed by 87–94 (GSSGSGKT). Residues 385–405 (QVVIMRLVQNLIMGLFLIFYL) form a helical membrane-spanning segment. The 258-residue stretch at 389-646 (MRLVQNLIMG…ILGMVVFKVR (258 aa)) folds into the ABC transmembrane type-2 domain. Over 406 to 422 (LRVQNNMLKGAVQDRVG) the chain is Extracellular. Residues 423 to 443 (LLYQLVGATPYTGMLNAVNLF) form a helical membrane-spanning segment. At 444-468 (PMLRAVSDQESQDGLYQKWQMLLAY) the chain is on the cytoplasmic side. The helical transmembrane segment at 469–490 (VLHALPFSIVATVIFSSVCYWT) threads the bilayer. Over 491 to 501 (LGLYPEVARFG) the chain is Extracellular. Residues 502-522 (YFSAALLAPHLIGEFLTLVLL) traverse the membrane as a helical segment. The Cytoplasmic portion of the chain corresponds to 523–529 (GMVQNPN). The helical transmembrane segment at 530–550 (IVNSIVALLSISGLLIGSGFI) threads the bilayer. The Extracellular portion of the chain corresponds to 551–624 (RNIEEMPIPL…PGATSRFTTN (74 aa)). N-linked (GlcNAc...) asparagine glycosylation is found at N585 and N592. Residues 625-645 (FLILYSFIPTLVILGMVVFKV) traverse the membrane as a helical segment. The Cytoplasmic segment spans residues 646-652 (RDYLISR).

The protein belongs to the ABC transporter superfamily. ABCG family. Eye pigment precursor importer (TC 3.A.1.204) subfamily. In terms of assembly, heterodimer with ABCG8. Mg(2+) is required as a cofactor. Post-translationally, N-glycosylated. N-glycosylation is important for efficient export out of the endoplasmic reticulum. Detected in liver (at protein level). Expressed only in liver and intestine.

The protein resides in the cell membrane. Its subcellular location is the apical cell membrane. It catalyses the reaction cholesterol(in) + ATP + H2O = cholesterol(out) + ADP + phosphate + H(+). The catalysed reaction is sitosterol(in) + ATP + H2O = sitosterol(out) + ADP + phosphate + H(+). In terms of biological role, ABCG5 and ABCG8 form an obligate heterodimer that mediates Mg(2+)- and ATP-dependent sterol transport across the cell membrane. Plays an essential role in the selective transport of dietary plant sterols and cholesterol in and out of the enterocytes and in the selective sterol excretion by the liver into bile. Required for normal sterol homeostasis. The heterodimer with ABCG8 has ATPase activity. The polypeptide is ATP-binding cassette sub-family G member 5 (Rattus norvegicus (Rat)).